The sequence spans 151 residues: Deoxyuridine 5'-triphosphate nucleotidohydrolase (151 aa).

Substrate contacts are provided by residues 71–73, asparagine 84, and 88–90; these read RSG and TID.

Belongs to the dUTPase family. Mg(2+) serves as cofactor.

The enzyme catalyses dUTP + H2O = dUMP + diphosphate + H(+). It functions in the pathway pyrimidine metabolism; dUMP biosynthesis; dUMP from dCTP (dUTP route): step 2/2. This enzyme is involved in nucleotide metabolism: it produces dUMP, the immediate precursor of thymidine nucleotides and it decreases the intracellular concentration of dUTP so that uracil cannot be incorporated into DNA. The protein is Deoxyuridine 5'-triphosphate nucleotidohydrolase of Gluconobacter oxydans (strain 621H) (Gluconobacter suboxydans).